The primary structure comprises 399 residues: Chorismate synthase (399 aa).

NADP(+)-binding residues include arginine 40 and arginine 46. FMN contacts are provided by residues 129 to 131 (RSS), 257 to 258 (QA), glycine 302, 317 to 321 (KPISS), and arginine 343.

Belongs to the chorismate synthase family. Homotetramer. Requires FMNH2 as cofactor.

It catalyses the reaction 5-O-(1-carboxyvinyl)-3-phosphoshikimate = chorismate + phosphate. The protein operates within metabolic intermediate biosynthesis; chorismate biosynthesis; chorismate from D-erythrose 4-phosphate and phosphoenolpyruvate: step 7/7. Catalyzes the anti-1,4-elimination of the C-3 phosphate and the C-6 proR hydrogen from 5-enolpyruvylshikimate-3-phosphate (EPSP) to yield chorismate, which is the branch point compound that serves as the starting substrate for the three terminal pathways of aromatic amino acid biosynthesis. This reaction introduces a second double bond into the aromatic ring system. In Chlorobium chlorochromatii (strain CaD3), this protein is Chorismate synthase.